A 109-amino-acid chain; its full sequence is Large ribosomal subunit protein P1 (109 aa).

Residues 71–109 (APAAASSAPAKKEEPKKEEPKKEEPKEEETDMDMGDLFG) are disordered. Basic and acidic residues predominate over residues 80–95 (AKKEEPKKEEPKKEEP). 3 repeat units span residues 81–85 (KKEEP), 86–90 (KKEEP), and 91–95 (KKEEP). The segment at 81 to 95 (KKEEPKKEEPKKEEP) is 3 X 5 AA tandem repeats of K-K-E-E-P. The span at 96 to 109 (KEEETDMDMGDLFG) shows a compositional bias: acidic residues.

It belongs to the eukaryotic ribosomal protein P1/P2 family. Not phosphorylated.

In Tetrahymena thermophila, this protein is Large ribosomal subunit protein P1 (RPLP1).